The chain runs to 342 residues: Ribosomal RNA small subunit methyltransferase H (342 aa).

S-adenosyl-L-methionine-binding positions include 36–38 (GGH), aspartate 56, phenylalanine 82, aspartate 100, and glutamine 107. Positions 309–342 (ENRESGMGKGHGAAASRFPTPDSRFPTSPNGDAP) are disordered. Residues 333-342 (FPTSPNGDAP) are compositionally biased toward polar residues.

This sequence belongs to the methyltransferase superfamily. RsmH family.

The protein localises to the cytoplasm. The enzyme catalyses cytidine(1402) in 16S rRNA + S-adenosyl-L-methionine = N(4)-methylcytidine(1402) in 16S rRNA + S-adenosyl-L-homocysteine + H(+). In terms of biological role, specifically methylates the N4 position of cytidine in position 1402 (C1402) of 16S rRNA. This Xanthomonas campestris pv. campestris (strain B100) protein is Ribosomal RNA small subunit methyltransferase H.